A 228-amino-acid chain; its full sequence is Probable septum site-determining protein MinC (228 aa).

It belongs to the MinC family. In terms of assembly, interacts with MinD and FtsZ.

In terms of biological role, cell division inhibitor that blocks the formation of polar Z ring septums. Rapidly oscillates between the poles of the cell to destabilize FtsZ filaments that have formed before they mature into polar Z rings. Prevents FtsZ polymerization. The chain is Probable septum site-determining protein MinC from Oceanobacillus iheyensis (strain DSM 14371 / CIP 107618 / JCM 11309 / KCTC 3954 / HTE831).